The sequence spans 596 residues: Selenocysteine-specific elongation factor (596 aa).

The tr-type G domain occupies 5 to 217 (RVNVNVGVLG…LLTSQISIPT (213 aa)). Positions 14-21 (GHIDSGKT) are G1. GDP is bound by residues Gly19, Thr21, and Ala22. GTP is bound by residues Gly19, Thr21, and Ala22. Residue Thr21 participates in Mg(2+) binding. The segment at 46-50 (GITLD) is G2. Residues Thr48 and Asp92 each contribute to the Mg(2+) site. Residues 92 to 95 (DCPG) are G3. The G4 stretch occupies residues 146-149 (NKID). GDP-binding residues include Asp149 and Lys187. Asp149 and Lys187 together coordinate GTP. The segment at 185–187 (AAK) is G5. Position 537 is a phosphoserine (Ser537). Thr545 is modified (phosphothreonine). The short motif at 547-553 (ALKKRAR) is the Nuclear localization signal element. A disordered region spans residues 548–573 (LKKRARAGRGEATRQEESAERSEPSQ). Over residues 555–571 (GRGEATRQEESAERSEP) the composition is skewed to basic and acidic residues. The residue at position 556 (Arg556) is an Omega-N-methylarginine.

Belongs to the TRAFAC class translation factor GTPase superfamily. Classic translation factor GTPase family. SelB subfamily. Requires Mg(2+) as cofactor. Mn(2+) serves as cofactor.

The protein localises to the cytoplasm. Its subcellular location is the nucleus. It carries out the reaction GTP + H2O = GDP + phosphate + H(+). In terms of biological role, translation factor required for the incorporation of the rare amino acid selenocysteine encoded by UGA codons. Replaces the eRF1-eRF3-GTP ternary complex for the insertion of selenocysteine directed by the UGA codon. Insertion of selenocysteine at UGA codons is mediated by SECISBP2 and EEFSEC: SECISBP2 (1) specifically binds the SECIS sequence once the 80S ribosome encounters an in-frame UGA codon and (2) contacts the RPS27A/eS31 of the 40S ribosome before ribosome stalling. (3) GTP-bound EEFSEC then delivers selenocysteinyl-tRNA(Sec) to the 80S ribosome and adopts a preaccommodated state conformation. (4) After GTP hydrolysis, EEFSEC dissociates from the assembly, selenocysteinyl-tRNA(Sec) accommodates, and peptide bond synthesis and selenoprotein elongation occur. This chain is Selenocysteine-specific elongation factor, found in Homo sapiens (Human).